The primary structure comprises 414 residues: Carboxynorspermidine synthase (414 aa).

This sequence belongs to the saccharopine dehydrogenase family. Carboxynorspermidine synthase subfamily.

The enzyme catalyses carboxynorspermidine + NADP(+) + H2O = L-aspartate 4-semialdehyde + propane-1,3-diamine + NADPH + H(+). The catalysed reaction is carboxyspermidine + NADP(+) + H2O = L-aspartate 4-semialdehyde + putrescine + NADPH + H(+). Involved in norspermidine biosynthesis. Catalyzes the synthesis of carboxynorspermidine from L-aspartate 4-semialdehyde and 1,3-diaminopropane. Is also active with putrescine as a substrate. Essential for biofilm formation. The sequence is that of Carboxynorspermidine synthase from Vibrio cholerae serotype O1 (strain ATCC 39315 / El Tor Inaba N16961).